Here is a 621-residue protein sequence, read N- to C-terminus: 1-deoxy-D-xylulose-5-phosphate synthase (621 aa).

Residues histidine 80 and glycine 121–serine 123 contribute to the thiamine diphosphate site. Position 152 (aspartate 152) interacts with Mg(2+). Thiamine diphosphate contacts are provided by residues glycine 153–alanine 154, asparagine 181, tyrosine 288, and glutamate 370. Asparagine 181 provides a ligand contact to Mg(2+).

It belongs to the transketolase family. DXPS subfamily. Homodimer. Mg(2+) is required as a cofactor. The cofactor is thiamine diphosphate.

The catalysed reaction is D-glyceraldehyde 3-phosphate + pyruvate + H(+) = 1-deoxy-D-xylulose 5-phosphate + CO2. It participates in metabolic intermediate biosynthesis; 1-deoxy-D-xylulose 5-phosphate biosynthesis; 1-deoxy-D-xylulose 5-phosphate from D-glyceraldehyde 3-phosphate and pyruvate: step 1/1. Functionally, catalyzes the acyloin condensation reaction between C atoms 2 and 3 of pyruvate and glyceraldehyde 3-phosphate to yield 1-deoxy-D-xylulose-5-phosphate (DXP). The sequence is that of 1-deoxy-D-xylulose-5-phosphate synthase from Pseudoalteromonas atlantica (strain T6c / ATCC BAA-1087).